A 243-amino-acid chain; its full sequence is Adenosine 5'-phosphosulfate reductase (243 aa).

[4Fe-4S] cluster is bound by residues C126, C127, C209, and C212. The Nucleophile; cysteine thiosulfonate intermediate role is filled by C235.

This sequence belongs to the PAPS reductase family. CysH subfamily. The cofactor is [4Fe-4S] cluster.

Its subcellular location is the cytoplasm. The catalysed reaction is [thioredoxin]-disulfide + sulfite + AMP + 2 H(+) = adenosine 5'-phosphosulfate + [thioredoxin]-dithiol. It functions in the pathway sulfur metabolism; hydrogen sulfide biosynthesis; sulfite from sulfate. Catalyzes the formation of sulfite from adenosine 5'-phosphosulfate (APS) using thioredoxin as an electron donor. This is Adenosine 5'-phosphosulfate reductase from Staphylococcus epidermidis (strain ATCC 12228 / FDA PCI 1200).